A 475-amino-acid chain; its full sequence is Glycogen synthase (475 aa).

Lys15 is an ADP-alpha-D-glucose binding site.

Belongs to the glycosyltransferase 1 family. Bacterial/plant glycogen synthase subfamily.

It carries out the reaction [(1-&gt;4)-alpha-D-glucosyl](n) + ADP-alpha-D-glucose = [(1-&gt;4)-alpha-D-glucosyl](n+1) + ADP + H(+). The protein operates within glycan biosynthesis; glycogen biosynthesis. Functionally, synthesizes alpha-1,4-glucan chains using ADP-glucose. The polypeptide is Glycogen synthase (Clostridium kluyveri (strain ATCC 8527 / DSM 555 / NBRC 12016 / NCIMB 10680 / K1)).